The primary structure comprises 176 residues: MVTKPARMYSRITGPAYTRKEFMGGVPYPKITTFVQGNQKKDFPIEMRLVAEEPCQIRHTALEAARVSVNRRMTEAAGLDYFYLKVVPYPHHVLREHKMATGAGADRISSGMRAAFGRPVGTAARVYPDDVIMIARTDEAHAKELKTALRKAAIKLPTPCKVVITKGKEIAGSLGI.

This sequence belongs to the universal ribosomal protein uL16 family.

This is Large ribosomal subunit protein uL16 from Thermoplasma acidophilum (strain ATCC 25905 / DSM 1728 / JCM 9062 / NBRC 15155 / AMRC-C165).